The primary structure comprises 686 residues: DNA gyrase subunit B (686 aa).

The segment covering 1–27 (MADSGNPNENNPSTDTGVNDAVSTSHG) has biased composition (polar residues). The interval 1 to 29 (MADSGNPNENNPSTDTGVNDAVSTSHGDA) is disordered. Residues 465-579 (CEIFIVEGDS…SGHVYLSRPP (115 aa)) enclose the Toprim domain. Mg(2+) is bound by residues E471, D544, and D546.

Belongs to the type II topoisomerase GyrB family. In terms of assembly, heterotetramer, composed of two GyrA and two GyrB chains. In the heterotetramer, GyrA contains the active site tyrosine that forms a transient covalent intermediate with DNA, while GyrB binds cofactors and catalyzes ATP hydrolysis. Requires Mg(2+) as cofactor. It depends on Mn(2+) as a cofactor. Ca(2+) is required as a cofactor.

It localises to the cytoplasm. The enzyme catalyses ATP-dependent breakage, passage and rejoining of double-stranded DNA.. In terms of biological role, a type II topoisomerase that negatively supercoils closed circular double-stranded (ds) DNA in an ATP-dependent manner to modulate DNA topology and maintain chromosomes in an underwound state. Negative supercoiling favors strand separation, and DNA replication, transcription, recombination and repair, all of which involve strand separation. Also able to catalyze the interconversion of other topological isomers of dsDNA rings, including catenanes and knotted rings. Type II topoisomerases break and join 2 DNA strands simultaneously in an ATP-dependent manner. This chain is DNA gyrase subunit B, found in Streptomyces coelicolor (strain ATCC BAA-471 / A3(2) / M145).